The chain runs to 342 residues: tRNA N6-adenosine threonylcarbamoyltransferase (342 aa).

Fe cation is bound by residues His-111 and His-115. Substrate-binding positions include 133-137, Asp-166, Gly-179, Asp-183, and Asn-273; that span reads AVSGG. Asp-301 contributes to the Fe cation binding site.

It belongs to the KAE1 / TsaD family. Fe(2+) serves as cofactor.

The protein resides in the cytoplasm. The catalysed reaction is L-threonylcarbamoyladenylate + adenosine(37) in tRNA = N(6)-L-threonylcarbamoyladenosine(37) in tRNA + AMP + H(+). Its function is as follows. Required for the formation of a threonylcarbamoyl group on adenosine at position 37 (t(6)A37) in tRNAs that read codons beginning with adenine. Is involved in the transfer of the threonylcarbamoyl moiety of threonylcarbamoyl-AMP (TC-AMP) to the N6 group of A37, together with TsaE and TsaB. TsaD likely plays a direct catalytic role in this reaction. This chain is tRNA N6-adenosine threonylcarbamoyltransferase, found in Syntrophotalea carbinolica (strain DSM 2380 / NBRC 103641 / GraBd1) (Pelobacter carbinolicus).